A 351-amino-acid chain; its full sequence is MTMKMMVHIYFVSLLLLLFHSYAIDIENEITEFFNKMRDTLPAKDSKWLNPACMFGGTMNDIAALGEPFSAKCPPIEDSLLSHRYKDYVVKWERLEKNRRRQVSNKRVKHGDLWIANYTSKFSNRRYLCTVTTKNGDCVQGIVRSHIRKPPSCIPKTYELGTHDKYGIDLYCGILYAKHYNNITWYKDNKEINIDDIKYSQTGKELIIHNPELEDSGRYDCYVHYDDVRIKNDIVVSRCKILTVIPSQDHRFKLILDPKINVTIGEPANITCTAVSTSLLIDDVLIEWENPSGWLIGFDFDVYSVLTSRGGITEATLYFENVTEEYIGNTYKCRGHNYYFEKTLTTTVVLE.

The signal sequence occupies residues 1 to 19 (MTMKMMVHIYFVSLLLLLF). 2 Ig-like C2-type domains span residues 65 to 147 (LGEP…RSHI) and 155 to 237 (PKTY…IVVS). Intrachain disulfides connect cysteine 73/cysteine 129 and cysteine 172/cysteine 221. N-linked (GlcNAc...) asparagine; by host glycosylation is found at asparagine 117, asparagine 182, asparagine 261, asparagine 269, and asparagine 321. An Ig-like V-type domain is found at 246-345 (PSQDHRFKLI…HNYYFEKTLT (100 aa)). Cysteine 272 and cysteine 333 are oxidised to a cystine.

It belongs to the interleukin-1 receptor family. As to quaternary structure, interacts with host IFNA1.

It localises to the secreted. Functionally, counteracts the antiviral effects of host IFN-alpha/beta and key IFN-inducible proteins involved in viral RNA degradation suxh as host OAS1. Acts as a soluble IFN-alpha receptor and thus inhibits the interaction between host IFN-alpha and its receptor. The protein is Soluble interferon alpha/beta receptor OPG204 (OPG204) of Vaccinia virus (strain Western Reserve) (VACV).